The primary structure comprises 112 residues: EHEAEIILDERQDNGDGNFNYRFETTNGIAEERVGVPGSQGQSNMKGGYSFNLPDGSRFQLSFAADENGYNADSPFIPTDHPLPAHVIELLALVEELKRQGATWDDKGVRIT.

The Chitin-binding type R&amp;R domain occupies 16–85 (DGNFNYRFET…FIPTDHPLPA (70 aa)). An O-linked (HexNAc) threonine glycan is attached at Thr79.

In terms of tissue distribution, arthrodial membrane.

This is Cuticle protein AM1239 from Cancer pagurus (Rock crab).